A 208-amino-acid polypeptide reads, in one-letter code: Guanylate kinase (208 aa).

One can recognise a Guanylate kinase-like domain in the interval 4–184; sequence GTLYIVSAPS…ALMDFKAIIR (181 aa). 11–18 contacts ATP; the sequence is APSGAGKS.

This sequence belongs to the guanylate kinase family.

The protein localises to the cytoplasm. The catalysed reaction is GMP + ATP = GDP + ADP. Essential for recycling GMP and indirectly, cGMP. The sequence is that of Guanylate kinase from Photobacterium profundum (strain SS9).